The chain runs to 240 residues: Eukaryotic translation initiation factor 3 subunit K (240 aa).

The PCI domain occupies 41–221 (YDKDIVLTIL…TIKTRNIDEK (181 aa)).

Belongs to the eIF-3 subunit K family. As to quaternary structure, component of the eukaryotic translation initiation factor 3 (eIF-3) complex.

It localises to the cytoplasm. Component of the eukaryotic translation initiation factor 3 (eIF-3) complex, which is involved in protein synthesis of a specialized repertoire of mRNAs and, together with other initiation factors, stimulates binding of mRNA and methionyl-tRNAi to the 40S ribosome. The eIF-3 complex specifically targets and initiates translation of a subset of mRNAs involved in cell proliferation. This Caenorhabditis briggsae protein is Eukaryotic translation initiation factor 3 subunit K.